The following is a 402-amino-acid chain: GTPase Obg (402 aa).

Residues 1-159 (MRFIDEAIVT…KELKFELKVV (159 aa)) enclose the Obg domain. Residues 160–334 (ADVGLIGLPN…VKYHLMNEIE (175 aa)) form the OBG-type G domain. Residues 166-173 (GLPNAGKS), 191-195 (FTTLV), 213-216 (DIPG), 283-286 (NKID), and 315-317 (STL) contribute to the GTP site. Residues serine 173 and threonine 193 each coordinate Mg(2+). The disordered stretch occupies residues 382 to 402 (AAFNNELDDDDDDGVEVVYAP). A compositionally biased stretch (acidic residues) spans 387 to 396 (ELDDDDDDGV).

This sequence belongs to the TRAFAC class OBG-HflX-like GTPase superfamily. OBG GTPase family. Monomer. Mg(2+) is required as a cofactor.

The protein localises to the cytoplasm. Functionally, an essential GTPase which binds GTP, GDP and possibly (p)ppGpp with moderate affinity, with high nucleotide exchange rates and a fairly low GTP hydrolysis rate. Plays a role in control of the cell cycle, stress response, ribosome biogenesis and in those bacteria that undergo differentiation, in morphogenesis control. This is GTPase Obg from Psychrobacter sp. (strain PRwf-1).